Here is a 123-residue protein sequence, read N- to C-terminus: Class I hydrophobin 2 (123 aa).

Positions 1-16 are cleaved as a signal peptide; that stretch reads MYAYTVIAFLAASVAA. 4 cysteine pairs are disulfide-bonded: Cys-35-Cys-97, Cys-43-Cys-91, Cys-44-Cys-72, and Cys-98-Cys-116.

This sequence belongs to the fungal hydrophobin family.

The protein localises to the secreted. It localises to the cell wall. In terms of biological role, aerial growth, conidiation, and dispersal of filamentous fungi in the environment rely upon a capability of their secreting small amphipathic proteins called hydrophobins (HPBs) with low sequence identity. Class I can self-assemble into an outermost layer of rodlet bundles on aerial cell surfaces, conferring cellular hydrophobicity that supports fungal growth, development and dispersal; whereas Class II form highly ordered films at water-air interfaces through intermolecular interactions but contribute nothing to the rodlet structure. HYD1 and HYD2 are required for the structural integrity of the long aerial chains of microconidia. Does not seem to be important for the ability to cause seedling disease. The protein is Class I hydrophobin 2 of Gibberella moniliformis (Maize ear and stalk rot fungus).